Here is a 965-residue protein sequence, read N- to C-terminus: Glycine dehydrogenase (decarboxylating) (965 aa).

Lysine 711 is modified (N6-(pyridoxal phosphate)lysine).

Belongs to the GcvP family. The glycine cleavage system is composed of four proteins: P, T, L and H. It depends on pyridoxal 5'-phosphate as a cofactor.

The catalysed reaction is N(6)-[(R)-lipoyl]-L-lysyl-[glycine-cleavage complex H protein] + glycine + H(+) = N(6)-[(R)-S(8)-aminomethyldihydrolipoyl]-L-lysyl-[glycine-cleavage complex H protein] + CO2. Functionally, the glycine cleavage system catalyzes the degradation of glycine. The P protein binds the alpha-amino group of glycine through its pyridoxal phosphate cofactor; CO(2) is released and the remaining methylamine moiety is then transferred to the lipoamide cofactor of the H protein. This is Glycine dehydrogenase (decarboxylating) from Psychrobacter cryohalolentis (strain ATCC BAA-1226 / DSM 17306 / VKM B-2378 / K5).